The sequence spans 113 residues: UPF0342 protein MGAS10750_Spy0713 (113 aa).

This sequence belongs to the UPF0342 family.

The sequence is that of UPF0342 protein MGAS10750_Spy0713 from Streptococcus pyogenes serotype M4 (strain MGAS10750).